The primary structure comprises 112 residues: UPF0060 membrane protein SCO3297 (112 aa).

The next 4 helical transmembrane spans lie at Ala-8–Val-28, Gly-33–Phe-53, Ile-62–Asp-82, and Arg-88–Pro-108.

It belongs to the UPF0060 family.

It localises to the cell membrane. In Streptomyces coelicolor (strain ATCC BAA-471 / A3(2) / M145), this protein is UPF0060 membrane protein SCO3297.